The sequence spans 292 residues: 4-hydroxy-tetrahydrodipicolinate synthase (292 aa).

Thr45 provides a ligand contact to pyruvate. Tyr133 functions as the Proton donor/acceptor in the catalytic mechanism. Lys161 serves as the catalytic Schiff-base intermediate with substrate. Residue Ile203 participates in pyruvate binding.

The protein belongs to the DapA family. Homotetramer; dimer of dimers.

Its subcellular location is the cytoplasm. It catalyses the reaction L-aspartate 4-semialdehyde + pyruvate = (2S,4S)-4-hydroxy-2,3,4,5-tetrahydrodipicolinate + H2O + H(+). It functions in the pathway amino-acid biosynthesis; L-lysine biosynthesis via DAP pathway; (S)-tetrahydrodipicolinate from L-aspartate: step 3/4. Catalyzes the condensation of (S)-aspartate-beta-semialdehyde [(S)-ASA] and pyruvate to 4-hydroxy-tetrahydrodipicolinate (HTPA). The chain is 4-hydroxy-tetrahydrodipicolinate synthase from Klebsiella pneumoniae subsp. pneumoniae (strain ATCC 700721 / MGH 78578).